The chain runs to 90 residues: Large ribosomal subunit protein bL27 (90 aa).

The disordered stretch occupies residues 1-24; the sequence is MAHKKGTGSTRNGRDSNSKRLGVK.

This sequence belongs to the bacterial ribosomal protein bL27 family.

The protein is Large ribosomal subunit protein bL27 of Prochlorococcus marinus (strain NATL1A).